Reading from the N-terminus, the 163-residue chain is Pheromone-binding protein 1 (163 aa).

The N-terminal stretch at 1–21 (MLGKISLLLLPVFVAINLVHS) is a signal peptide. 3 disulfide bridges follow: Cys40-Cys75, Cys71-Cys129, and Cys118-Cys138.

Belongs to the PBP/GOBP family. As to expression, antenna.

Functionally, this major soluble protein in olfactory sensilla of male moths might serve to solubilize the extremely hydrophobic pheromone molecules and to transport pheromone through the aqueous lymph to receptors located on olfactory cilia. The sequence is that of Pheromone-binding protein 1 from Antheraea pernyi (Chinese oak silk moth).